A 107-amino-acid chain; its full sequence is uncharacterized protein (107 aa).

This is an uncharacterized protein from Acidianus sp. F28 (AFV-2).